Consider the following 303-residue polypeptide: MTQQRTLKNTIRATGVGLHSGDKVYMTLRPAPVDHGVVFRRVDLEPIVEVPADAELVTETTLCTGLSCNGAKIQTVEHLMSALAGLGVDNVIVELSSAELPIMDGSSGPFVFLLQSAGIVEQSKPKRFIRIKQTVEVRDGDKVARFEPYEGYKLGFTIEFNHPMIPAKQSRQEIDFSTSAYVTEISRARTFGFMRDLEYMRERNLGLGGSMDNAIVLDEFRVLNEDGLRYTNEFVRHKILDAIGDLYLAGGAILGAYEGFKSGHALNNKLVRALLADQAAWEWVSFPEGTEQPPVTYASPVYA.

H78, H237, and D241 together coordinate Zn(2+). H264 serves as the catalytic Proton donor.

It belongs to the LpxC family. Requires Zn(2+) as cofactor.

It catalyses the reaction a UDP-3-O-[(3R)-3-hydroxyacyl]-N-acetyl-alpha-D-glucosamine + H2O = a UDP-3-O-[(3R)-3-hydroxyacyl]-alpha-D-glucosamine + acetate. The protein operates within glycolipid biosynthesis; lipid IV(A) biosynthesis; lipid IV(A) from (3R)-3-hydroxytetradecanoyl-[acyl-carrier-protein] and UDP-N-acetyl-alpha-D-glucosamine: step 2/6. Catalyzes the hydrolysis of UDP-3-O-myristoyl-N-acetylglucosamine to form UDP-3-O-myristoylglucosamine and acetate, the committed step in lipid A biosynthesis. The sequence is that of UDP-3-O-acyl-N-acetylglucosamine deacetylase from Xanthomonas oryzae pv. oryzae (strain MAFF 311018).